The primary structure comprises 437 residues: tRNA(Ile2) 2-agmatinylcytidine synthetase TiaS (437 aa).

Belongs to the TiaS family.

It is found in the cytoplasm. The catalysed reaction is cytidine(34) in tRNA(Ile2) + agmatine + ATP + H2O = 2-agmatinylcytidine(34) in tRNA(Ile2) + AMP + 2 phosphate + 2 H(+). Its function is as follows. ATP-dependent agmatine transferase that catalyzes the formation of 2-agmatinylcytidine (agm2C) at the wobble position (C34) of tRNA(Ile2), converting the codon specificity from AUG to AUA. The protein is tRNA(Ile2) 2-agmatinylcytidine synthetase TiaS of Thermoplasma volcanium (strain ATCC 51530 / DSM 4299 / JCM 9571 / NBRC 15438 / GSS1).